Consider the following 488-residue polypeptide: Zinc metalloproteinase-disintegrin 8 (488 aa).

The signal sequence occupies residues 1-20 (MIQVLLVTICLAVFPYQGSS). A propeptide spanning residues 21–191 (IILESGNVND…KASQLNLPPE (171 aa)) is cleaved from the precursor. The region spanning 198–396 (TYIELVVVAD…STTRCLHNEP (199 aa)) is the Peptidase M12B domain. 2 residues coordinate Ca(2+): glutamate 201 and aspartate 285. Asparagine 296 carries N-linked (GlcNAc...) asparagine glycosylation. 3 cysteine pairs are disulfide-bonded: cysteine 309/cysteine 391, cysteine 349/cysteine 373, and cysteine 351/cysteine 356. Residue histidine 334 coordinates Zn(2+). Glutamate 335 is an active-site residue. Zn(2+) contacts are provided by histidine 338 and histidine 344. 6 residues coordinate Ca(2+): cysteine 391, asparagine 394, asparagine 409, glutamate 413, glutamate 416, and aspartate 419. One can recognise a Disintegrin domain in the interval 404-488 (PPFCGNYFKE…ADCPRNGLYG (85 aa)). 7 disulfide bridges follow: cysteine 407–cysteine 426, cysteine 418–cysteine 436, cysteine 420–cysteine 431, cysteine 430–cysteine 453, cysteine 444–cysteine 450, cysteine 449–cysteine 474, and cysteine 462–cysteine 481. Residues 466-468 (RGD) carry the Cell attachment site motif.

This sequence belongs to the venom metalloproteinase (M12B) family. P-II subfamily. It depends on Zn(2+) as a cofactor. Expressed by the venom gland.

It localises to the secreted. In terms of biological role, inhibits ADP-induced platelet aggregation (probably by binding integrin alpha-IIb/beta-3 (ITGA2B/ITGB3)) and degrades fibrinogen. The polypeptide is Zinc metalloproteinase-disintegrin 8 (Crotalus adamanteus (Eastern diamondback rattlesnake)).